Consider the following 209-residue polypeptide: Uracil phosphoribosyltransferase (209 aa).

5-phospho-alpha-D-ribose 1-diphosphate is bound by residues arginine 79, arginine 104, and 131 to 139 (DPMLATGNS). Residues isoleucine 194 and 199-201 (GDA) each bind uracil. Aspartate 200 contacts 5-phospho-alpha-D-ribose 1-diphosphate.

It belongs to the UPRTase family. Mg(2+) serves as cofactor.

The enzyme catalyses UMP + diphosphate = 5-phospho-alpha-D-ribose 1-diphosphate + uracil. Its pathway is pyrimidine metabolism; UMP biosynthesis via salvage pathway; UMP from uracil: step 1/1. Allosterically activated by GTP. In terms of biological role, catalyzes the conversion of uracil and 5-phospho-alpha-D-ribose 1-diphosphate (PRPP) to UMP and diphosphate. The protein is Uracil phosphoribosyltransferase of Rhizobium meliloti (strain 1021) (Ensifer meliloti).